A 118-amino-acid chain; its full sequence is Cobalt transport protein CbiN (118 aa).

2 helical membrane-spanning segments follow: residues 7 to 27 (INALLLLAVAALAVLPLVLGL) and 70 to 90 (SALFALQAALGAGVLAYYFGL). Residues 99–118 (ERASAASGAAAAPGDAPEGD) are disordered. Over residues 102 to 118 (SAASGAAAAPGDAPEGD) the composition is skewed to low complexity.

The protein belongs to the CbiN family. In terms of assembly, forms an energy-coupling factor (ECF) transporter complex composed of an ATP-binding protein (A component, CbiO), a transmembrane protein (T component, CbiQ) and 2 possible substrate-capture proteins (S components, CbiM and CbiN) of unknown stoichimetry.

The protein resides in the cell membrane. It participates in cofactor biosynthesis; adenosylcobalamin biosynthesis. In terms of biological role, part of the energy-coupling factor (ECF) transporter complex CbiMNOQ involved in cobalt import. The polypeptide is Cobalt transport protein CbiN (Streptomyces coelicolor (strain ATCC BAA-471 / A3(2) / M145)).